The sequence spans 530 residues: UDP-glucuronosyltransferase 2B15 (530 aa).

Residues 1–23 (MSGKWISALLLLQISFCFKSGNC) form the signal peptide. Residue N316 is glycosylated (N-linked (GlcNAc...) asparagine). Residues 494 to 510 (VIGFLLSCVAVTVVLAL) form a helical membrane-spanning segment.

Belongs to the UDP-glycosyltransferase family. In terms of processing, N-glycosylated. In terms of tissue distribution, liver. Lower levels seen in the kidney and testis.

It localises to the endoplasmic reticulum membrane. It carries out the reaction glucuronate acceptor + UDP-alpha-D-glucuronate = acceptor beta-D-glucuronoside + UDP + H(+). It catalyses the reaction 17alpha-estradiol + UDP-alpha-D-glucuronate = 17alpha-estradiol 3-O-(beta-D-glucuronate) + UDP + H(+). The enzyme catalyses 16alpha,17alpha-estriol + UDP-alpha-D-glucuronate = 16alpha,17alpha-estriol 3-O-(beta-D-glucuronate) + UDP + H(+). The catalysed reaction is 17beta-hydroxy-5alpha-androstan-3-one + UDP-alpha-D-glucuronate = 5alpha-dihydrotestosterone 17-O-(beta-D-glucuronate) + UDP + H(+). In terms of biological role, UDP-glucuronosyltransferase (UGT) that catalyzes phase II biotransformation reactions in which lipophilic substrates are conjugated with glucuronic acid to increase the metabolite's water solubility, thereby facilitating excretion into either the urine or bile. Essential for the elimination and detoxification of drugs, xenobiotics and endogenous compounds. Catalyzes the glucuronidation of endogenous steroid hormones such as androgens (testosterone, androsterone) and estrogens (estradiol, epiestradiol, estriol, catechol estrogens). Displays glucuronidation activity toward several classes of xenoblotic substrates, including phenolic compounds (eugenol, 4-nitrophenol, 4-hydroxybiphenyl) and phenylpropanoids (naringenin, coumarins). Catalyzes the glucuronidation of monoterpenoid alcohols such as borneol, menthol and isomenthol, a class of natural compounds used in essential oils. The protein is UDP-glucuronosyltransferase 2B15 of Rattus norvegicus (Rat).